Reading from the N-terminus, the 199-residue chain is Holliday junction branch migration complex subunit RuvA (199 aa).

A domain I region spans residues 1–64 (MIALLTGKLA…EDAINLYGFR (64 aa)). The interval 65–143 (TQQEKELFQL…KLGLAQPQAG (79 aa)) is domain II. The interval 144 to 148 (GTTAP) is flexible linker. A domain III region spans residues 149–199 (AKQEIRDDVLSALINLGYKEAVVQKALAELKVTEDATVELVLKQALKILMK).

It belongs to the RuvA family. Homotetramer. Forms an RuvA(8)-RuvB(12)-Holliday junction (HJ) complex. HJ DNA is sandwiched between 2 RuvA tetramers; dsDNA enters through RuvA and exits via RuvB. An RuvB hexamer assembles on each DNA strand where it exits the tetramer. Each RuvB hexamer is contacted by two RuvA subunits (via domain III) on 2 adjacent RuvB subunits; this complex drives branch migration. In the full resolvosome a probable DNA-RuvA(4)-RuvB(12)-RuvC(2) complex forms which resolves the HJ.

The protein resides in the cytoplasm. Its function is as follows. The RuvA-RuvB-RuvC complex processes Holliday junction (HJ) DNA during genetic recombination and DNA repair, while the RuvA-RuvB complex plays an important role in the rescue of blocked DNA replication forks via replication fork reversal (RFR). RuvA specifically binds to HJ cruciform DNA, conferring on it an open structure. The RuvB hexamer acts as an ATP-dependent pump, pulling dsDNA into and through the RuvAB complex. HJ branch migration allows RuvC to scan DNA until it finds its consensus sequence, where it cleaves and resolves the cruciform DNA. In Citrifermentans bemidjiense (strain ATCC BAA-1014 / DSM 16622 / JCM 12645 / Bem) (Geobacter bemidjiensis), this protein is Holliday junction branch migration complex subunit RuvA.